A 762-amino-acid polypeptide reads, in one-letter code: ATP-dependent RNA helicase SUV3 homolog, mitochondrial (762 aa).

Residues 1–36 (MQNTRRCISLICVTRQPPSLRATYGAVAAARCLHRA) constitute a mitochondrion transit peptide. A Helicase ATP-binding domain is found at 181–321 (NARALTRKIV…ALELLQKICE (141 aa)). Position 194 to 201 (194 to 201 (GPTNSGKT)) interacts with ATP. The Helicase C-terminal domain occupies 331 to 508 (RYDRLTELTV…PTADQIELYA (178 aa)). The tract at residues 716–762 (EWDAQQVGQAAAASTSSKESQESPPDDSDDEDSYPGSYKKTRRKRRK) is disordered. Residues 721–730 (QVGQAAAAST) are compositionally biased toward polar residues. Acidic residues predominate over residues 739-748 (PPDDSDDEDS).

The protein belongs to the helicase family. The cofactor is Mg(2+). Mn(2+) is required as a cofactor.

The protein resides in the mitochondrion. It catalyses the reaction ATP + H2O = ADP + phosphate + H(+). Major helicase player in mitochondrial RNA metabolism and maintenance. Likely component of the mitochondrial degradosome (mtEXO) complex, that degrades 3' overhang double-stranded RNA with a 3'-to-5' directionality in an ATP-dependent manner. ATPase and ATP-dependent multisubstrate helicase, able to unwind double-stranded (ds) DNA and RNA, and RNA/DNA heteroduplexes in the 5'-to-3' direction. Regulates mRNA stability and is required for the correct processing and maturation of mitochondrial transcripts. In Drosophila pseudoobscura pseudoobscura (Fruit fly), this protein is ATP-dependent RNA helicase SUV3 homolog, mitochondrial.